The sequence spans 156 residues: Small ribosomal subunit protein uS7 (156 aa).

It belongs to the universal ribosomal protein uS7 family. In terms of assembly, part of the 30S ribosomal subunit. Contacts proteins S9 and S11.

In terms of biological role, one of the primary rRNA binding proteins, it binds directly to 16S rRNA where it nucleates assembly of the head domain of the 30S subunit. Is located at the subunit interface close to the decoding center, probably blocks exit of the E-site tRNA. The polypeptide is Small ribosomal subunit protein uS7 (Leuconostoc citreum (strain KM20)).